We begin with the raw amino-acid sequence, 217 residues long: Glycosylphosphatidylinositol anchor biosynthesis protein 11 (217 aa).

A run of 6 helical transmembrane segments spans residues 45 to 61, 74 to 94, 111 to 131, 138 to 158, 169 to 189, and 195 to 215; these read TWQTIPFHLIVLSYWFI, WLLVPCQVLYLALQFNPATVY, VTCILLTIPCMLLVVLFGAPF, TWLLSLHCCVLSYPAVYSVLN, YFISIAVGCWISCLAIPLDWD, and WPIPLVVGAQLGAMFGYTFCS.

The protein belongs to the PIGF family.

Its subcellular location is the endoplasmic reticulum membrane. It functions in the pathway glycolipid biosynthesis; glycosylphosphatidylinositol-anchor biosynthesis. Its function is as follows. Acts in the GPI biosynthetic pathway between GlcNAc-PI synthesis and GPI transfer to protein. The sequence is that of Glycosylphosphatidylinositol anchor biosynthesis protein 11 (GPI11) from Eremothecium gossypii (strain ATCC 10895 / CBS 109.51 / FGSC 9923 / NRRL Y-1056) (Yeast).